The primary structure comprises 1154 residues: Chromosome partition protein Smc (1154 aa).

32-39 (PNGCGKSN) is a binding site for ATP. Coiled-coil stretches lie at residues 170–215 (VAGL…ARQA), 282–505 (LREA…LNGE), and 627–993 (AARR…EARE).

This sequence belongs to the SMC family. Homodimer.

It is found in the cytoplasm. In terms of biological role, required for chromosome condensation and partitioning. The protein is Chromosome partition protein Smc of Rhodopseudomonas palustris (strain ATCC BAA-98 / CGA009).